Here is a 631-residue protein sequence, read N- to C-terminus: 1-deoxy-D-xylulose-5-phosphate synthase (631 aa).

Residues H78 and 119–121 contribute to the thiamine diphosphate site; that span reads AHS. D150 lines the Mg(2+) pocket. Thiamine diphosphate-binding positions include 151–152, N179, Y286, and E368; that span reads GA. A Mg(2+)-binding site is contributed by N179.

This sequence belongs to the transketolase family. DXPS subfamily. As to quaternary structure, homodimer. Requires Mg(2+) as cofactor. Thiamine diphosphate serves as cofactor.

It catalyses the reaction D-glyceraldehyde 3-phosphate + pyruvate + H(+) = 1-deoxy-D-xylulose 5-phosphate + CO2. It functions in the pathway metabolic intermediate biosynthesis; 1-deoxy-D-xylulose 5-phosphate biosynthesis; 1-deoxy-D-xylulose 5-phosphate from D-glyceraldehyde 3-phosphate and pyruvate: step 1/1. Its function is as follows. Catalyzes the acyloin condensation reaction between C atoms 2 and 3 of pyruvate and glyceraldehyde 3-phosphate to yield 1-deoxy-D-xylulose-5-phosphate (DXP). This Verminephrobacter eiseniae (strain EF01-2) protein is 1-deoxy-D-xylulose-5-phosphate synthase.